The chain runs to 283 residues: Elongation factor Ts (283 aa).

Residues 80 to 83 (TDFV) form an involved in Mg(2+) ion dislocation from EF-Tu region.

Belongs to the EF-Ts family.

It localises to the cytoplasm. Associates with the EF-Tu.GDP complex and induces the exchange of GDP to GTP. It remains bound to the aminoacyl-tRNA.EF-Tu.GTP complex up to the GTP hydrolysis stage on the ribosome. This Actinobacillus pleuropneumoniae serotype 5b (strain L20) protein is Elongation factor Ts.